The chain runs to 223 residues: Large ribosomal subunit protein uL3 (223 aa).

It belongs to the universal ribosomal protein uL3 family. In terms of assembly, part of the 50S ribosomal subunit. Forms a cluster with proteins L14 and L19.

In terms of biological role, one of the primary rRNA binding proteins, it binds directly near the 3'-end of the 23S rRNA, where it nucleates assembly of the 50S subunit. This is Large ribosomal subunit protein uL3 from Mycoplasma capricolum subsp. capricolum (strain California kid / ATCC 27343 / NCTC 10154).